Consider the following 21-residue polypeptide: Dahlein-5.6 (21 aa).

In terms of tissue distribution, expressed by the skin dorsal glands.

Its subcellular location is the secreted. Its function is as follows. Has no antimicrobial activity. Strongly inhibits the formation of NO by neuronal nitric oxide synthase at micromolar concentrations. The sequence is that of Dahlein-5.6 from Ranoidea dahlii (Dahl's aquatic frog).